The chain runs to 546 residues: Chaperonin GroEL (546 aa).

ATP is bound by residues 29–32 (TMGP), Lys50, 86–90 (DGTTT), Gly414, and Asp492.

It belongs to the chaperonin (HSP60) family. In terms of assembly, forms a cylinder of 14 subunits composed of two heptameric rings stacked back-to-back. Interacts with the co-chaperonin GroES.

It is found in the cytoplasm. It catalyses the reaction ATP + H2O + a folded polypeptide = ADP + phosphate + an unfolded polypeptide.. In terms of biological role, together with its co-chaperonin GroES, plays an essential role in assisting protein folding. The GroEL-GroES system forms a nano-cage that allows encapsulation of the non-native substrate proteins and provides a physical environment optimized to promote and accelerate protein folding. The chain is Chaperonin GroEL from Helicobacter pylori (strain ATCC 700392 / 26695) (Campylobacter pylori).